The chain runs to 257 residues: MSVPLILTILAGAATFIGAFLGVLGQKPSNRLLAFSLGFAAGIMLLISLMEMLPAALAAEGMSPVLGYGMFIFGLLGYFGLDRMLPHAHPQDLMQKSVQPLPKSIKRTAILLTLGISLHNFPEGIATFVTASSNLELGFGIALAVALHNIPEGLAVAGPVYAATGSKRTAILWAGISGLAEILGGVLAWLILGSMISPVVMAAIMAVVAGIMVALSVDELMPLAKEIDPNNNPSYGVLCGMSVMGFSLVLLQTAGIG.

3 helical membrane passes run 5–25 (LILT…GVLG), 32–52 (LLAF…LMEM), and 61–81 (GMSP…YFGL). Asn120 and Glu123 together coordinate Fe(2+). Positions 123 and 148 each coordinate Zn(2+). 4 consecutive transmembrane segments (helical) span residues 137 to 157 (LGFG…LAVA), 171 to 191 (ILWA…AWLI), 195 to 215 (MISP…MVAL), and 236 to 256 (GVLC…TAGI). 3 residues coordinate Fe(2+): Asn149, Glu152, and Glu181. Residue Glu152 coordinates Zn(2+).

This sequence belongs to the ZIP transporter (TC 2.A.5) family. ZupT subfamily.

The protein localises to the cell inner membrane. The enzyme catalyses Zn(2+)(in) = Zn(2+)(out). In terms of biological role, mediates zinc uptake. May also transport other divalent cations. The protein is Zinc transporter ZupT of Escherichia coli O7:K1 (strain IAI39 / ExPEC).